The chain runs to 360 residues: Phospho-N-acetylmuramoyl-pentapeptide-transferase (360 aa).

10 helical membrane passes run Thr26 to Gln46, Gly70 to Trp90, Tyr97 to Tyr117, Ala132 to Ala152, Val168 to Ser188, Gly199 to Thr219, Ala236 to Phe256, Val263 to Val283, Leu288 to Val308, and Val338 to Lys358.

This sequence belongs to the glycosyltransferase 4 family. MraY subfamily. It depends on Mg(2+) as a cofactor.

The protein resides in the cell inner membrane. It carries out the reaction UDP-N-acetyl-alpha-D-muramoyl-L-alanyl-gamma-D-glutamyl-meso-2,6-diaminopimeloyl-D-alanyl-D-alanine + di-trans,octa-cis-undecaprenyl phosphate = di-trans,octa-cis-undecaprenyl diphospho-N-acetyl-alpha-D-muramoyl-L-alanyl-D-glutamyl-meso-2,6-diaminopimeloyl-D-alanyl-D-alanine + UMP. Its pathway is cell wall biogenesis; peptidoglycan biosynthesis. Functionally, catalyzes the initial step of the lipid cycle reactions in the biosynthesis of the cell wall peptidoglycan: transfers peptidoglycan precursor phospho-MurNAc-pentapeptide from UDP-MurNAc-pentapeptide onto the lipid carrier undecaprenyl phosphate, yielding undecaprenyl-pyrophosphoryl-MurNAc-pentapeptide, known as lipid I. The chain is Phospho-N-acetylmuramoyl-pentapeptide-transferase from Alkalilimnicola ehrlichii (strain ATCC BAA-1101 / DSM 17681 / MLHE-1).